The primary structure comprises 224 residues: ATP synthase subunit a (224 aa).

The next 6 membrane-spanning stretches (helical) occupy residues phenylalanine 17 to leucine 37, isoleucine 72 to isoleucine 92, leucine 99 to isoleucine 119, methionine 125 to isoleucine 145, isoleucine 166 to leucine 186, and valine 187 to isoleucine 207.

It belongs to the ATPase A chain family. F-type ATPases have 2 components, CF(1) - the catalytic core - and CF(0) - the membrane proton channel. CF(1) has five subunits: alpha(3), beta(3), gamma(1), delta(1), epsilon(1). CF(0) has three main subunits: a, b and c.

It is found in the mitochondrion inner membrane. Its function is as follows. Mitochondrial membrane ATP synthase (F(1)F(0) ATP synthase or Complex V) produces ATP from ADP in the presence of a proton gradient across the membrane which is generated by electron transport complexes of the respiratory chain. F-type ATPases consist of two structural domains, F(1) - containing the extramembraneous catalytic core and F(0) - containing the membrane proton channel, linked together by a central stalk and a peripheral stalk. During catalysis, ATP synthesis in the catalytic domain of F(1) is coupled via a rotary mechanism of the central stalk subunits to proton translocation. Key component of the proton channel; it may play a direct role in the translocation of protons across the membrane. The protein is ATP synthase subunit a (mt:ATPase6) of Drosophila melanogaster (Fruit fly).